Reading from the N-terminus, the 1010-residue chain is BrkA autotransporter (1010 aa).

Residues 1-42 form the signal peptide; the sequence is MYLDRFRQCPSSLQIPRSAWRLHALAAALALAGMARLAPAAA. The 269-residue stretch at 742–1010 folds into the Autotransporter domain; the sequence is LRADAGGPWA…SFHAGYRYSF (269 aa).

It localises to the periplasm. It is found in the secreted. The protein localises to the cell surface. Its subcellular location is the cell outer membrane. Its function is as follows. Inhibits the classical pathway of complement activation and prevents accumulation of deposited C4. The chain is BrkA autotransporter from Bordetella pertussis (strain Tohama I / ATCC BAA-589 / NCTC 13251).